Reading from the N-terminus, the 283-residue chain is Coiled-coil domain-containing protein 42 homolog (283 aa).

Coiled-coil stretches lie at residues 31 to 139 and 174 to 204; these read ATQL…LQRY and QDLR…HRVS.

This sequence belongs to the CFAP73 family.

This chain is Coiled-coil domain-containing protein 42 homolog, found in Monosiga brevicollis (Choanoflagellate).